The following is a 342-amino-acid chain: Large ribosomal subunit protein uL3 (342 aa).

Positions 1–22 (MGHRKLSSPRRGSAGLRPRKRA) are disordered.

Belongs to the universal ribosomal protein uL3 family. As to quaternary structure, part of the 50S ribosomal subunit. Forms a cluster with proteins L14 and L24e.

In terms of biological role, one of the primary rRNA binding proteins, it binds directly near the 3'-end of the 23S rRNA, where it nucleates assembly of the 50S subunit. The protein is Large ribosomal subunit protein uL3 of Sulfolobus acidocaldarius (strain ATCC 33909 / DSM 639 / JCM 8929 / NBRC 15157 / NCIMB 11770).